Consider the following 589-residue polypeptide: Progranulin (589 aa).

The N-terminal stretch at 1 to 17 (MWVLMSWLAFAAGLVAG) is a signal peptide. Residue Asn-38 is glycosylated (N-linked (GlcNAc...) asparagine). 2 cysteine pairs are disulfide-bonded: Cys-125–Cys-138 and Cys-132–Cys-148. Asn-263 carries an N-linked (GlcNAc...) asparagine glycan. Intrachain disulfides connect Cys-282-Cys-294, Cys-288-Cys-304, Cys-295-Cys-312, Cys-305-Cys-319, Cys-313-Cys-326, Cys-320-Cys-333, Cys-364-Cys-376, Cys-370-Cys-386, Cys-395-Cys-408, and Cys-402-Cys-414. A glycan (N-linked (GlcNAc...) asparagine) is linked at Asn-373. Asn-526 is a glycosylation site (N-linked (GlcNAc...) asparagine).

It belongs to the granulin family. As to quaternary structure, progranulin is secreted as a homodimer. Interacts with SLPI; interaction protects progranulin from proteolysis. Interacts (via region corresponding to granulin-7 peptide) with CTSD; stabilizes CTSD and increases its proteolytic activity. Interacts (via region corresponding to granulin-7 peptide) with SORT1; this interaction mediates endocytosis and lysosome delivery of progranulin; interaction occurs at the neuronal cell surface in a stressed nervous system. Interacts with PSAP; facilitates lysosomal delivery of progranulin from the extracellular space and the biosynthetic pathway. Forms a complex with PSAP and M6PR; PSAP bridges the binding between progranulin and M6PR. Forms a complex with PSAP and SORT1; progranulin bridges the interaction between PSAP and SORT1; facilitates lysosomal targeting of PSAP via SORT1; interaction enhances PSAP uptake in primary cortical neurons. Interacts (via regions corresponding to granulin-2 and granulin-7 peptides) with GBA1; this interaction prevents aggregation of GBA1-SCARB2 complex via interaction with HSPA1A upon stress. Interacts (via region corresponding to granulin-7 peptide) with HSPA1A; mediates recruitment of HSPA1A to GBA1 and prevents GBA1 aggregation in response to stress. Post-translationally, N-glycosylated. In terms of processing, cleaved by ELANE; proteolysis is blocked by SLPI and is concentration- and time-dependent and induces CXCL8/IL-8 production; granulin-3 and granulin-4 are resistant to ELANE. Cleaved by CTSL in lysosome thus regulating the maturation and turnover of progranulin within the lysosome. As to expression, highly expressed at the wound site and diminishes away from the wound. Not expressed in fibroblasts and endothelial cells in intact skin. In adult brain, expressed primarily in neurons and in resting and reactive microglia. Expressed in both neurons and microglia. Highly expressed in activated microglia in response to injury. Expressed in macrophage.

Its subcellular location is the secreted. It is found in the lysosome. Functionally, secreted protein that acts as a key regulator of lysosomal function and as a growth factor involved in inflammation, wound healing and cell proliferation. Regulates protein trafficking to lysosomes, and also the activity of lysosomal enzymes. Also facilitates the acidification of lysosomes, causing degradation of mature CTSD by CTSB. In addition, functions as a wound-related growth factor that acts directly on dermal fibroblasts and endothelial cells to promote division, migration and the formation of capillary-like tubule structures. Also promotes epithelial cell proliferation by blocking TNF-mediated neutrophil activation preventing release of oxidants and proteases. Moreover, modulates inflammation in neurons by preserving neurons survival, axonal outgrowth and neuronal integrity. Inhibits epithelial cell proliferation and induces epithelial cells to secrete IL-8. Its function is as follows. Stabilizes CTSD through interaction with CTSD leading to maintain its aspartic-type peptidase activity. This Mus musculus (Mouse) protein is Progranulin (Grn).